We begin with the raw amino-acid sequence, 605 residues long: Aspartate--tRNA(Asp/Asn) ligase (605 aa).

Position 186 (glutamate 186) interacts with L-aspartate. The tract at residues 210–213 (QQFK) is aspartate. Residues arginine 232 and histidine 460 each coordinate L-aspartate. ATP is bound at residue 232–234 (RDE). Glutamate 494 serves as a coordination point for ATP. Arginine 501 contributes to the L-aspartate binding site. Position 546–549 (546–549 (GLDR)) interacts with ATP.

This sequence belongs to the class-II aminoacyl-tRNA synthetase family. Type 1 subfamily. As to quaternary structure, homodimer.

It localises to the cytoplasm. The enzyme catalyses tRNA(Asx) + L-aspartate + ATP = L-aspartyl-tRNA(Asx) + AMP + diphosphate. In terms of biological role, aspartyl-tRNA synthetase with relaxed tRNA specificity since it is able to aspartylate not only its cognate tRNA(Asp) but also tRNA(Asn). Reaction proceeds in two steps: L-aspartate is first activated by ATP to form Asp-AMP and then transferred to the acceptor end of tRNA(Asp/Asn). The polypeptide is Aspartate--tRNA(Asp/Asn) ligase (Chlorobium chlorochromatii (strain CaD3)).